The primary structure comprises 198 residues: MIEFVYPHTQLVAGVDEVGRGPLVGAVVTAAVILDPARPIAGLNDSKKLSEKRRLALYEEIKEKALSWSLGRAEPHEIDELNILHATMLAMQRAVAGLHIAPEYVLIDGNRCPKLPMPAMAVVKGDSRVPEISAASILAKVTRDAEMAALDIVFPQYGFAQHKGYPTAFHLEKLAEHGATEHHRRSFGPVKRALGLAS.

Residues 10-198 enclose the RNase H type-2 domain; it reads QLVAGVDEVG…PVKRALGLAS (189 aa). A divalent metal cation is bound by residues D16, E17, and D108.

Belongs to the RNase HII family. The cofactor is Mn(2+). It depends on Mg(2+) as a cofactor.

It localises to the cytoplasm. It carries out the reaction Endonucleolytic cleavage to 5'-phosphomonoester.. In terms of biological role, endonuclease that specifically degrades the RNA of RNA-DNA hybrids. The sequence is that of Ribonuclease HII from Shigella sonnei (strain Ss046).